A 216-amino-acid polypeptide reads, in one-letter code: CsgBAC operon transcriptional regulatory protein (216 aa).

One can recognise an HTH luxR-type domain in the interval 149 to 214 (NSTESALLTH…QAVSWANDNL (66 aa)). The segment at residues 173–192 (NNEIARSLFISENTVKTHLY) is a DNA-binding region (H-T-H motif).

It is found in the cell inner membrane. Functionally, the master regulator for adhesive curli fimbriae expression; necessary for transcription of the csgBAC/ymdA operon. Plays a positive role in biofilm formation. May have the capability to respond to starvation and/or high cell density by activating csgBA transcription. Low-level constitutive expression confers an adherent curli fimbriae-expressing phenotype, up-regulates 10 genes and down-regulates 14 others. The protein is CsgBAC operon transcriptional regulatory protein (csgD) of Escherichia coli (strain K12).